A 609-amino-acid polypeptide reads, in one-letter code: UvrABC system protein C (609 aa).

In terms of domain architecture, GIY-YIG spans threonine 15 to valine 92. The UVR domain occupies aspartate 202–leucine 237.

Belongs to the UvrC family. In terms of assembly, interacts with UvrB in an incision complex.

Its subcellular location is the cytoplasm. In terms of biological role, the UvrABC repair system catalyzes the recognition and processing of DNA lesions. UvrC both incises the 5' and 3' sides of the lesion. The N-terminal half is responsible for the 3' incision and the C-terminal half is responsible for the 5' incision. The polypeptide is UvrABC system protein C (Coxiella burnetii (strain RSA 493 / Nine Mile phase I)).